Here is an 894-residue protein sequence, read N- to C-terminus: Disease resistance protein SUMM2 (894 aa).

Residues 31 to 71 (ELSKNVVAMKKDMEVLKKKRDDVKRRVDIEEFTRRRERLSQ) are a coiled coil. The NB-ARC domain occupies 140-443 (TLATPIARIE…CEGFIDENES (304 aa)). 183-190 (GMGGVGKT) serves as a coordination point for ATP. LRR repeat units lie at residues 517-538 (SVRR…PECL), 539-561 (ELTT…FFRC), 564-586 (MLVV…ISKL), 588-610 (SLRY…QELK), 611-633 (KLRY…SNIS), 634-656 (SLRK…EELQ), and 660-681 (HLEV…LNAP).

It belongs to the disease resistance NB-LRR family. As to quaternary structure, interacts with PAT1.

Its activity is regulated as follows. Negatively regulated by the MEKK1-MKK1-MKK2-MPK4 kinase cascade. In terms of biological role, disease resistance protein that mediates defense responses against the bacterial pathogen Pseudomonas syringae pv tomato strain DC3000, and the virulent oomycete Hyaloperonospora arabidopsidis isolate Noco2. Becomes active when the MEKK1-MKK1-MKK2-MPK4 kinase cascade is disrupted by the microbial effector hopAI1. Does not seem to be required for the activation of MPK4 by flg22, or flg22-induced up-regulation of PAD3. Functions downstream of MEKK2/SUMM1 in immune responses, including cell death and defense responses. This chain is Disease resistance protein SUMM2, found in Arabidopsis thaliana (Mouse-ear cress).